Reading from the N-terminus, the 514-residue chain is ATP synthase subunit alpha (514 aa).

170–177 serves as a coordination point for ATP; sequence GDRQTGKT.

It belongs to the ATPase alpha/beta chains family. As to quaternary structure, F-type ATPases have 2 components, CF(1) - the catalytic core - and CF(0) - the membrane proton channel. CF(1) has five subunits: alpha(3), beta(3), gamma(1), delta(1), epsilon(1). CF(0) has three main subunits: a(1), b(2) and c(9-12). The alpha and beta chains form an alternating ring which encloses part of the gamma chain. CF(1) is attached to CF(0) by a central stalk formed by the gamma and epsilon chains, while a peripheral stalk is formed by the delta and b chains.

The protein resides in the cell inner membrane. It catalyses the reaction ATP + H2O + 4 H(+)(in) = ADP + phosphate + 5 H(+)(out). Produces ATP from ADP in the presence of a proton gradient across the membrane. The alpha chain is a regulatory subunit. This is ATP synthase subunit alpha from Psychrobacter sp. (strain PRwf-1).